The chain runs to 633 residues: tRNA uridine 5-carboxymethylaminomethyl modification enzyme MnmG (633 aa).

Residues G15–G20, V127, and S182 contribute to the FAD site. Residue G276 to F290 participates in NAD(+) binding. An FAD-binding site is contributed by Q373.

This sequence belongs to the MnmG family. Homodimer. Heterotetramer of two MnmE and two MnmG subunits. The cofactor is FAD.

It is found in the cytoplasm. In terms of biological role, NAD-binding protein involved in the addition of a carboxymethylaminomethyl (cmnm) group at the wobble position (U34) of certain tRNAs, forming tRNA-cmnm(5)s(2)U34. In Streptococcus thermophilus (strain CNRZ 1066), this protein is tRNA uridine 5-carboxymethylaminomethyl modification enzyme MnmG.